The sequence spans 49 residues: uncharacterized protein (49 aa).

A helical transmembrane segment spans residues 5–25 (LTTIFSVVIVLAIFLYFGLLI).

This sequence belongs to the plectrovirus ORF12 protein family.

It localises to the host membrane. This is an uncharacterized protein from Spiroplasma virus SpV1-R8A2 B (SpV1).